Consider the following 82-residue polypeptide: MFEKVNRSGLIIYLYYNRDAKKLQDYGDITYHSKKHRYLQLYVPTQEVEQLVGRLSKEKFIKKVRVCHIQELETPFVGNLYR.

It belongs to the UPF0298 family.

It is found in the cytoplasm. In Streptococcus pneumoniae (strain CGSP14), this protein is UPF0298 protein SPCG_0698.